Reading from the N-terminus, the 152-residue chain is UPF0266 membrane protein YobD (152 aa).

Helical transmembrane passes span 6–26 (LVLI…QFIM), 45–65 (VDSV…VTSH), and 67–87 (AQMT…IFWI).

This sequence belongs to the UPF0266 family.

It is found in the cell inner membrane. The chain is UPF0266 membrane protein YobD from Salmonella paratyphi A (strain ATCC 9150 / SARB42).